Here is a 160-residue protein sequence, read N- to C-terminus: Serine-protein kinase RsbW (160 aa).

Belongs to the anti-sigma-factor family.

It carries out the reaction L-seryl-[protein] + ATP = O-phospho-L-seryl-[protein] + ADP + H(+). The enzyme catalyses L-threonyl-[protein] + ATP = O-phospho-L-threonyl-[protein] + ADP + H(+). In terms of biological role, negative regulator of sigma-B activity. Phosphorylates and inactivates its specific antagonist protein, RsbV. Upon phosphorylation of RsbV, RsbW is released and binds to sigma-B, thereby blocking its ability to form an RNA polymerase holoenzyme (E-sigma-B). The chain is Serine-protein kinase RsbW from Bacillus cereus (strain AH187).